Reading from the N-terminus, the 152-residue chain is Deoxyuridine 5'-triphosphate nucleotidohydrolase (152 aa).

Residues 71–73 (RSG), asparagine 84, 88–90 (LID), and methionine 98 each bind substrate.

It belongs to the dUTPase family. The cofactor is Mg(2+).

It carries out the reaction dUTP + H2O = dUMP + diphosphate + H(+). Its pathway is pyrimidine metabolism; dUMP biosynthesis; dUMP from dCTP (dUTP route): step 2/2. Functionally, this enzyme is involved in nucleotide metabolism: it produces dUMP, the immediate precursor of thymidine nucleotides and it decreases the intracellular concentration of dUTP so that uracil cannot be incorporated into DNA. The protein is Deoxyuridine 5'-triphosphate nucleotidohydrolase of Shewanella halifaxensis (strain HAW-EB4).